A 288-amino-acid chain; its full sequence is Polyamine aminopropyltransferase (288 aa).

The 230-residue stretch at 9 to 238 (ETLHDQFGQY…GIMTFAWATD (230 aa)) folds into the PABS domain. Gln33 is an S-methyl-5'-thioadenosine binding site. Positions 64 and 88 each coordinate spermidine. Residues Glu108 and 140–141 (DG) contribute to the S-methyl-5'-thioadenosine site. Asp158 (proton acceptor) is an active-site residue. Residue 158–161 (DCTD) participates in spermidine binding. Pro165 is an S-methyl-5'-thioadenosine binding site.

The protein belongs to the spermidine/spermine synthase family. In terms of assembly, homodimer or homotetramer.

It is found in the cytoplasm. It carries out the reaction S-adenosyl 3-(methylsulfanyl)propylamine + putrescine = S-methyl-5'-thioadenosine + spermidine + H(+). Its pathway is amine and polyamine biosynthesis; spermidine biosynthesis; spermidine from putrescine: step 1/1. In terms of biological role, catalyzes the irreversible transfer of a propylamine group from the amino donor S-adenosylmethioninamine (decarboxy-AdoMet) to putrescine (1,4-diaminobutane) to yield spermidine. This Escherichia coli O17:K52:H18 (strain UMN026 / ExPEC) protein is Polyamine aminopropyltransferase.